An 82-amino-acid polypeptide reads, in one-letter code: Chaperone protein DnaJ 1 (82 aa).

The tract at residues 1-33 (YHLGGPPVTLKLPPGTPAGRTMRARGKGAVRKD) is disordered.

The protein belongs to the DnaJ family. Homodimer. Zn(2+) is required as a cofactor.

The protein resides in the cytoplasm. Participates actively in the response to hyperosmotic and heat shock by preventing the aggregation of stress-denatured proteins and by disaggregating proteins, also in an autonomous, DnaK-independent fashion. Unfolded proteins bind initially to DnaJ; upon interaction with the DnaJ-bound protein, DnaK hydrolyzes its bound ATP, resulting in the formation of a stable complex. GrpE releases ADP from DnaK; ATP binding to DnaK triggers the release of the substrate protein, thus completing the reaction cycle. Several rounds of ATP-dependent interactions between DnaJ, DnaK and GrpE are required for fully efficient folding. Also involved, together with DnaK and GrpE, in the DNA replication of plasmids through activation of initiation proteins. The protein is Chaperone protein DnaJ 1 (dnaJ1) of Streptomyces albus G.